The chain runs to 749 residues: Triacylglycerol lipase 5 (749 aa).

Positions 54–59 match the HXXXXD acyltransferase motif motif; the sequence is HAISYD. Positions 183–388 constitute a PNPLA domain; the sequence is LVLSGGSTFG…DNDMPISRLS (206 aa). Residues 214–218 carry the GXSXG motif; it reads GSSAG. The Nucleophile role is filled by Ser216. 5 N-linked (GlcNAc...) asparagine glycosylation sites follow: Asn270, Asn289, Asn297, Asn304, and Asn321. The active-site Proton acceptor is the Asp375. N-linked (GlcNAc...) asparagine glycosylation is found at Asn474 and Asn589. Residues 585-643 form a disordered region; it reads IKSPNKTAAPGRFPLQPLPSPSSTFNKRKMDMLSPSPSPSTSPQRSKSSFTQQGTRQKA. Residues 623–633 show a composition bias toward low complexity; sequence PSTSPQRSKSS. Polar residues predominate over residues 634-643; sequence FTQQGTRQKA. Ser645 carries the post-translational modification Phosphoserine. N-linked (GlcNAc...) asparagine glycosylation is found at Asn680, Asn714, and Asn742.

It localises to the lipid droplet. It catalyses the reaction a triacylglycerol + H2O = a diacylglycerol + a fatty acid + H(+). The catalysed reaction is 1-(9Z-octadecenoyl)-sn-glycero-3-phosphate + (9Z)-octadecenoyl-CoA = 1,2-di-(9Z-octadecenoyl)-sn-glycero-3-phosphate + CoA. The enzyme catalyses 1-(9Z-octadecenoyl)-sn-glycero-3-phosphate + hexadecanoyl-CoA = 1-hexadecanoyl-2-(9Z-octadecenoyl)-sn-glycero-3-phosphate + CoA. With respect to regulation, loses its lipolytic activity in cells lacking nonpolar lipids, but retains its side activity as lysophospholipid acyltransferase. Its function is as follows. Lipid particle-localized triacylglycerol (TAG) lipase. The lipid droplet/particle is a lipid storage compartment which serves as a depot of energy and building blocks for membrane lipid biosynthesis. Involved in the mobilization of the non-polar storage lipids triacylglycerols (TAGs) from lipid particles by hydrolysis of TAGs, releasing and supplying specific fatty acids to the appropriate metabolic pathways. Also catalyzes the acylation of lysophosphatidic acid (LPA). This is Triacylglycerol lipase 5 (TGL5) from Saccharomyces cerevisiae (strain ATCC 204508 / S288c) (Baker's yeast).